We begin with the raw amino-acid sequence, 134 residues long: Zinc finger protein 593 (134 aa).

Residues 1-25 (MGRSRRTGAHRAHSLARQMKAKKRR) show a composition bias toward basic residues. Disordered stretches follow at residues 1–58 (MGRS…LPGG) and 85–134 (HKKR…DTST). Positions 26-36 (PDLDEIHRELR) are enriched in basic and acidic residues. Residues 61–85 (HRCLACARYFIDSANLKTHFRSKDH) form a C2H2-type zinc finger.

Belongs to the ZNF593/BUD20 C2H2-type zinc-finger protein family. In terms of assembly, associates with pre-60S ribosomal particles.

The protein resides in the nucleus. It is found in the nucleolus. The protein localises to the cytoplasm. In terms of biological role, involved in pre-60S ribosomal particles maturation by promoting the nuclear export of the 60S ribosome. Negatively modulates the DNA binding activity of Oct-2 and therefore its transcriptional regulatory activity. In Mus musculus (Mouse), this protein is Zinc finger protein 593 (Znf593).